Here is a 252-residue protein sequence, read N- to C-terminus: 3-dehydroquinate dehydratase (252 aa).

3-dehydroquinate contacts are provided by residues serine 21, 46-48 (EWR), and arginine 82. The active-site Proton donor/acceptor is histidine 143. Lysine 170 (schiff-base intermediate with substrate) is an active-site residue. Residues arginine 213, serine 232, and glutamine 236 each contribute to the 3-dehydroquinate site.

This sequence belongs to the type-I 3-dehydroquinase family. In terms of assembly, homodimer.

It carries out the reaction 3-dehydroquinate = 3-dehydroshikimate + H2O. Its pathway is metabolic intermediate biosynthesis; chorismate biosynthesis; chorismate from D-erythrose 4-phosphate and phosphoenolpyruvate: step 3/7. Its function is as follows. Involved in the third step of the chorismate pathway, which leads to the biosynthesis of aromatic amino acids. Catalyzes the cis-dehydration of 3-dehydroquinate (DHQ) and introduces the first double bond of the aromatic ring to yield 3-dehydroshikimate. In Escherichia coli (strain 55989 / EAEC), this protein is 3-dehydroquinate dehydratase.